The chain runs to 326 residues: tRNA-modifying protein YgfZ (326 aa).

Residues tryptophan 27 and tryptophan 189 each coordinate folate.

Belongs to the tRNA-modifying YgfZ family.

The protein resides in the cytoplasm. Its function is as follows. Folate-binding protein involved in regulating the level of ATP-DnaA and in the modification of some tRNAs. It is probably a key factor in regulatory networks that act via tRNA modification, such as initiation of chromosomal replication. The protein is tRNA-modifying protein YgfZ of Salmonella typhimurium (strain LT2 / SGSC1412 / ATCC 700720).